The sequence spans 291 residues: Glycine--tRNA ligase alpha subunit (291 aa).

This sequence belongs to the class-II aminoacyl-tRNA synthetase family. As to quaternary structure, tetramer of two alpha and two beta subunits.

The protein localises to the cytoplasm. The catalysed reaction is tRNA(Gly) + glycine + ATP = glycyl-tRNA(Gly) + AMP + diphosphate. The polypeptide is Glycine--tRNA ligase alpha subunit (Rhizorhabdus wittichii (strain DSM 6014 / CCUG 31198 / JCM 15750 / NBRC 105917 / EY 4224 / RW1) (Sphingomonas wittichii)).